A 406-amino-acid chain; its full sequence is GTPase Obg (406 aa).

Residues 1–159 (MRFVDEAVIT…REIRLELKVL (159 aa)) form the Obg domain. Residues 120–143 (GGEGGLGNTHFKSSTNRAPRKCTT) are disordered. In terms of domain architecture, OBG-type G spans 160-333 (ADVGLLGMPN…VVYYLMDQIE (174 aa)). GTP contacts are provided by residues 166–173 (GMPNAGKS), 191–195 (FTTMV), 213–216 (DIPG), 283–286 (NKLD), and 314–316 (SGL). The Mg(2+) site is built by serine 173 and threonine 193. Residues 381–406 (ESMMDDDDDFDDDEDDGDVESIYVRD) are disordered. The segment covering 383-399 (MMDDDDDFDDDEDDGDV) has biased composition (acidic residues).

This sequence belongs to the TRAFAC class OBG-HflX-like GTPase superfamily. OBG GTPase family. In terms of assembly, monomer. Requires Mg(2+) as cofactor.

The protein localises to the cytoplasm. In terms of biological role, an essential GTPase which binds GTP, GDP and possibly (p)ppGpp with moderate affinity, with high nucleotide exchange rates and a fairly low GTP hydrolysis rate. Plays a role in control of the cell cycle, stress response, ribosome biogenesis and in those bacteria that undergo differentiation, in morphogenesis control. The polypeptide is GTPase Obg (Acinetobacter baumannii (strain SDF)).